Here is a 350-residue protein sequence, read N- to C-terminus: Protein pelota homolog (350 aa).

The protein belongs to the eukaryotic release factor 1 family. Pelota subfamily. As to quaternary structure, monomer. The cofactor is a divalent metal cation.

It is found in the cytoplasm. Functionally, may function in recognizing stalled ribosomes, interact with stem-loop structures in stalled mRNA molecules, and effect endonucleolytic cleavage of the mRNA. May play a role in the release non-functional ribosomes and degradation of damaged mRNAs. Has endoribonuclease activity. This is Protein pelota homolog from Methanosarcina acetivorans (strain ATCC 35395 / DSM 2834 / JCM 12185 / C2A).